Consider the following 843-residue polypeptide: Taste receptor type 1 member 2 (843 aa).

A signal peptide spans 1-19 (MGPQARTLHLLFLLLHALP). The Extracellular portion of the chain corresponds to 20–570 (KPVMLVGNSD…AFLEWHEVPT (551 aa)). N-linked (GlcNAc...) asparagine glycosylation is found at asparagine 87, asparagine 296, asparagine 316, asparagine 355, asparagine 372, asparagine 432, asparagine 484, asparagine 491, and asparagine 531. The helical transmembrane segment at 571-591 (IVVTILAALGFISTLAILLIF) threads the bilayer. Topologically, residues 592–606 (WRHFQTPMVRSAGGP) are cytoplasmic. The chain crosses the membrane as a helical span at residues 607–627 (MCFLMLVPLLLAFGMVPVYVG). Topologically, residues 628–642 (PPTVFSCFCRQAFFT) are extracellular. The helical transmembrane segment at 643–663 (VCFSVCLSCITVRSFQIVCVF) threads the bilayer. Topologically, residues 664–682 (KMARRLPSAYGFWMRYHGP) are cytoplasmic. Residues 683 to 703 (YVFVAFITAVKVALVAGNMLA) form a helical membrane-spanning segment. Residues 704 to 731 (TTINPIGRTDPDDPNIIILSCHPNYRNG) lie on the Extracellular side of the membrane. A helical transmembrane segment spans residues 732 to 752 (LLFNTSMDLLLSVLGFSFAYV). Residues 753–764 (GKELPTNYNEAK) are Cytoplasmic-facing. Residues 765-785 (FITLSMTFSFTSSISLCTFMS) traverse the membrane as a helical segment. Over 786-789 (VHDG) the chain is Extracellular. A helical membrane pass occupies residues 790-810 (VLVTIMDLLVTVLNFLAIGLG). The Cytoplasmic portion of the chain corresponds to 811–843 (YFGPKCYMILFYPERNTSAYFNSMIQGYTMRKS).

It belongs to the G-protein coupled receptor 3 family. TAS1R subfamily. Forms heterodimers with TAS1R3. In terms of tissue distribution, expressed mainly in circumvallate and foliate taste papillae.

Its subcellular location is the cell membrane. Putative taste receptor. TAS1R2/TAS1R3 recognizes diverse natural and synthetic sweeteners. This chain is Taste receptor type 1 member 2 (Tas1r2), found in Mus musculus (Mouse).